A 180-amino-acid chain; its full sequence is Outer membrane protein YfaZ (180 aa).

An N-terminal signal peptide occupies residues 1-21 (MKKIALAGLAGMLLVSASVNA).

Its subcellular location is the cell outer membrane. This chain is Outer membrane protein YfaZ (yfaZ), found in Escherichia coli (strain K12).